Consider the following 134-residue polypeptide: Profilin-3 (134 aa).

Cys13 and Cys118 are joined by a disulfide. Residues Ala84 to Thr100 carry the Involved in PIP2 interaction motif.

Belongs to the profilin family. In terms of assembly, occurs in many kinds of cells as a complex with monomeric actin in a 1:1 ratio. In terms of processing, phosphorylated by MAP kinases.

Its subcellular location is the cytoplasm. The protein resides in the cytoskeleton. In terms of biological role, binds to actin and affects the structure of the cytoskeleton. At high concentrations, profilin prevents the polymerization of actin, whereas it enhances it at low concentrations. The protein is Profilin-3 of Olea europaea (Common olive).